Here is a 104-residue protein sequence, read N- to C-terminus: Large ribosomal subunit protein bL28 (104 aa).

Belongs to the bacterial ribosomal protein bL28 family.

The polypeptide is Large ribosomal subunit protein bL28 (Wolbachia sp. subsp. Brugia malayi (strain TRS)).